Here is a 298-residue protein sequence, read N- to C-terminus: Porphobilinogen deaminase (298 aa).

C239 carries the post-translational modification S-(dipyrrolylmethanemethyl)cysteine.

Belongs to the HMBS family. In terms of assembly, monomer. It depends on dipyrromethane as a cofactor.

It catalyses the reaction 4 porphobilinogen + H2O = hydroxymethylbilane + 4 NH4(+). Its pathway is porphyrin-containing compound metabolism; protoporphyrin-IX biosynthesis; coproporphyrinogen-III from 5-aminolevulinate: step 2/4. In terms of biological role, tetrapolymerization of the monopyrrole PBG into the hydroxymethylbilane pre-uroporphyrinogen in several discrete steps. This chain is Porphobilinogen deaminase, found in Orientia tsutsugamushi (strain Boryong) (Rickettsia tsutsugamushi).